The sequence spans 79 residues: Cell division protein ZapB (79 aa).

Residues 4–78 are a coiled coil; that stretch reads EVFEKLEAKV…LRALLGKMEE (75 aa).

The protein belongs to the ZapB family. As to quaternary structure, homodimer. The ends of the coiled-coil dimer bind to each other, forming polymers. Interacts with FtsZ.

Its subcellular location is the cytoplasm. In terms of biological role, non-essential, abundant cell division factor that is required for proper Z-ring formation. It is recruited early to the divisome by direct interaction with FtsZ, stimulating Z-ring assembly and thereby promoting cell division earlier in the cell cycle. Its recruitment to the Z-ring requires functional FtsA or ZipA. The polypeptide is Cell division protein ZapB (Erwinia tasmaniensis (strain DSM 17950 / CFBP 7177 / CIP 109463 / NCPPB 4357 / Et1/99)).